The following is a 95-amino-acid chain: Large ribosomal subunit protein bL25 (95 aa).

It belongs to the bacterial ribosomal protein bL25 family. As to quaternary structure, part of the 50S ribosomal subunit; part of the 5S rRNA/L5/L18/L25 subcomplex. Contacts the 5S rRNA. Binds to the 5S rRNA independently of L5 and L18.

Functionally, this is one of the proteins that binds to the 5S RNA in the ribosome where it forms part of the central protuberance. The chain is Large ribosomal subunit protein bL25 from Yersinia enterocolitica serotype O:8 / biotype 1B (strain NCTC 13174 / 8081).